The chain runs to 66 residues: uncharacterized protein (66 aa).

2 consecutive transmembrane segments (helical) span residues 6 to 26 (KIIMILGAVLLIIGAVLHFVG) and 39 to 59 (VTFFFPVVTCIIISVVLSILL).

The protein localises to the cell membrane. This is an uncharacterized protein from Bacillus subtilis (strain 168).